The primary structure comprises 246 residues: Bis(5'-nucleosyl)-tetraphosphatase PrpE [asymmetrical] (246 aa).

It belongs to the PrpE family. Ni(2+) serves as cofactor.

It carries out the reaction P(1),P(4)-bis(5'-guanosyl) tetraphosphate + H2O = GMP + GTP + 2 H(+). Asymmetrically hydrolyzes Ap4p to yield AMP and ATP. The sequence is that of Bis(5'-nucleosyl)-tetraphosphatase PrpE [asymmetrical] from Bacillus cereus (strain AH820).